Consider the following 390-residue polypeptide: MNIHEYQGKDILRKFGVSVPKGIVAFTAEEARQAAEQLFEEQENPVVVVKAQIHAGGRGKAGGVKLAKSPDEVFDIARQMIGCTLVTHQTGPEGKEVRRLLVEEGMNIEKEFYVGITLDRATSQNVLMVSTEGGMEIETVAEETPEKLLKIQIHPLQGLQGFQARQAAFFLGLEGDKFKNTVKFITALYKAYTAIDASIAEINPLVITKEGKVMALDAKINFDSNALFRHKDFLELRDISEEDPFEVEASKSNLNYVRLDGNVGCMVNGAGLAMATMDMIQLAGGKPANFLDVGGSASPETVEEGFKIIMSDKNVKAILINIFGGIVRCDRVAGGVIEAAKKVGLDMPVIVRLEGTNAEIAQKMLDESGLNLIAANGLREAAQKVNEALS.

The ATP-grasp domain maps to 9–248 (KDILRKFGVS…ISEEDPFEVE (240 aa)). ATP contacts are provided by residues Lys50, 57–59 (GRG), Glu103, Met106, and Glu111. Residues Asn203 and Asp217 each coordinate Mg(2+). Substrate is bound by residues Asn268 and 325–327 (GIV).

Belongs to the succinate/malate CoA ligase beta subunit family. As to quaternary structure, heterotetramer of two alpha and two beta subunits. The cofactor is Mg(2+).

It catalyses the reaction succinate + ATP + CoA = succinyl-CoA + ADP + phosphate. It carries out the reaction GTP + succinate + CoA = succinyl-CoA + GDP + phosphate. It participates in carbohydrate metabolism; tricarboxylic acid cycle; succinate from succinyl-CoA (ligase route): step 1/1. Succinyl-CoA synthetase functions in the citric acid cycle (TCA), coupling the hydrolysis of succinyl-CoA to the synthesis of either ATP or GTP and thus represents the only step of substrate-level phosphorylation in the TCA. The beta subunit provides nucleotide specificity of the enzyme and binds the substrate succinate, while the binding sites for coenzyme A and phosphate are found in the alpha subunit. The sequence is that of Succinate--CoA ligase [ADP-forming] subunit beta from Prosthecochloris aestuarii (strain DSM 271 / SK 413).